A 140-amino-acid chain; its full sequence is Lymphocyte antigen 6 complex locus protein G5c (140 aa).

Positions 1–41 (MRFMAGPAGSQNPGPMCFHSSLQALYTVLLIVLVMMSLVFG) are cleaved as a signal peptide. Residues 60–140 (LRCYRCLLET…SQCCFLGFLQ (81 aa)) form the UPAR/Ly6 domain. 4 cysteine pairs are disulfide-bonded: C62-C89, C65-C74, C81-C107, and C116-C133. N96 is a glycosylation site (N-linked (GlcNAc...) asparagine).

In terms of assembly, forms oligomers. Post-translationally, N-glycosylated.

The protein localises to the secreted. In terms of biological role, may have a role in hematopoietic cell differentiation. The polypeptide is Lymphocyte antigen 6 complex locus protein G5c (LY6G5C) (Macaca mulatta (Rhesus macaque)).